The sequence spans 693 residues: Polyribonucleotide nucleotidyltransferase (693 aa).

Residues aspartate 485 and aspartate 491 each coordinate Mg(2+). One can recognise a KH domain in the interval 552 to 611; sequence PRIMVLEINPSKIGDLIGPSGKNIKKIIEETHTTINIKPEGLVYISAPDQESAEKAAQMV. The S1 motif domain occupies 621–691; that stretch reads GDIFLGKVIR…SSGRISLTRK (71 aa).

This sequence belongs to the polyribonucleotide nucleotidyltransferase family. Mg(2+) serves as cofactor.

The protein localises to the cytoplasm. It carries out the reaction RNA(n+1) + phosphate = RNA(n) + a ribonucleoside 5'-diphosphate. Involved in mRNA degradation. Catalyzes the phosphorolysis of single-stranded polyribonucleotides processively in the 3'- to 5'-direction. This Dictyoglomus thermophilum (strain ATCC 35947 / DSM 3960 / H-6-12) protein is Polyribonucleotide nucleotidyltransferase.